The chain runs to 1577 residues: High molecular weight form of myosin-1 (1577 aa).

A Myosin motor domain is found at 75 to 751; the sequence is KSVDDLVQMD…EQRGLELQRN (677 aa). N6,N6,N6-trimethyllysine is present on lysine 119. An ATP-binding site is contributed by 168 to 175; it reads GESGAGKT. Actin-binding regions lie at residues 628 to 650 and 730 to 744; these read LDSL…KPNS and QVGK…PEQR. The region spanning 755–782 is the IQ domain; the sequence is ERVTIQIQAGVRRMFARRLYKRMRAIKP. The 141-residue stretch at 1261–1401 folds into the MyTH4 domain; it reads WTKSPIPTSL…PNVEQILAAK (141 aa). Disordered stretches follow at residues 1442–1466 and 1483–1516; these read SRPA…QQAA and QQQQ…LPAE. Low complexity-rich tracts occupy residues 1444–1466 and 1483–1497; these read PAQA…QQAA and QQQQ…QQQA. The 59-residue stretch at 1519–1577 folds into the SH3 domain; it reads EEYKQVEVVYDYDGGGDAQRLVLVKGAIITVIKEYEGWAYGSTDDGQVGLYPINYTRPI.

This sequence belongs to the TRAFAC class myosin-kinesin ATPase superfamily. Myosin family. Myosin I heavy chain is single-headed.

In Acanthamoeba castellanii (Amoeba), this protein is High molecular weight form of myosin-1.